Here is a 232-residue protein sequence, read N- to C-terminus: Ubiquinone biosynthesis O-methyltransferase (232 aa).

Positions 36, 55, 76, and 120 each coordinate S-adenosyl-L-methionine.

Belongs to the methyltransferase superfamily. UbiG/COQ3 family.

It carries out the reaction a 3-demethylubiquinol + S-adenosyl-L-methionine = a ubiquinol + S-adenosyl-L-homocysteine + H(+). The catalysed reaction is a 3-(all-trans-polyprenyl)benzene-1,2-diol + S-adenosyl-L-methionine = a 2-methoxy-6-(all-trans-polyprenyl)phenol + S-adenosyl-L-homocysteine + H(+). Its pathway is cofactor biosynthesis; ubiquinone biosynthesis. O-methyltransferase that catalyzes the 2 O-methylation steps in the ubiquinone biosynthetic pathway. The protein is Ubiquinone biosynthesis O-methyltransferase of Pseudomonas putida (strain GB-1).